We begin with the raw amino-acid sequence, 150 residues long: uncharacterized protein (150 aa).

One can recognise an HTH asnC-type domain in the interval leucine 5–glycine 66. Positions isoleucine 24 to lysine 43 form a DNA-binding region, H-T-H motif.

This is an uncharacterized protein from Pyrococcus abyssi (strain GE5 / Orsay).